A 158-amino-acid polypeptide reads, in one-letter code: Single-stranded DNA-binding protein 2 (158 aa).

The SSB domain maps to 1–107 (MNETIVCVVG…IDALAVGHDL (107 aa)). The disordered stretch occupies residues 109–158 (RGTSAFRRPSAKDGEAGVSPAARPEPNWETEPGSQPSVEHQPQPEPAGVT).

Homotetramer.

The chain is Single-stranded DNA-binding protein 2 (ssb2) from Streptomyces avermitilis (strain ATCC 31267 / DSM 46492 / JCM 5070 / NBRC 14893 / NCIMB 12804 / NRRL 8165 / MA-4680).